The chain runs to 457 residues: Serine/threonine-protein phosphatase 2A regulatory subunit B'' subunit gamma (457 aa).

EF-hand domains are found at residues 276 to 311 and 344 to 379; these read PSAL…TLTS and KEPA…IQEQ. D289, D291, N293, M295, and E300 together coordinate Ca(2+).

The protein localises to the nucleus. It localises to the cytoplasm. Possible role in the regulation of cell death. The protein is Serine/threonine-protein phosphatase 2A regulatory subunit B'' subunit gamma (ppp2r3c) of Danio rerio (Zebrafish).